We begin with the raw amino-acid sequence, 176 residues long: Nucleoside triphosphate/diphosphate phosphatase (176 aa).

R23 serves as the catalytic Proton donor. Residues N87, D103, D105, D107, D120, and E123 each coordinate Mg(2+).

This sequence belongs to the Ntdp family. Mg(2+) is required as a cofactor.

It carries out the reaction a ribonucleoside 5'-triphosphate + H2O = a ribonucleoside 5'-diphosphate + phosphate + H(+). The enzyme catalyses a ribonucleoside 5'-diphosphate + H2O = a ribonucleoside 5'-phosphate + phosphate + H(+). Has nucleoside phosphatase activity towards nucleoside triphosphates and nucleoside diphosphates. The polypeptide is Nucleoside triphosphate/diphosphate phosphatase (Bacillus licheniformis (strain ATCC 14580 / DSM 13 / JCM 2505 / CCUG 7422 / NBRC 12200 / NCIMB 9375 / NCTC 10341 / NRRL NRS-1264 / Gibson 46)).